Here is a 517-residue protein sequence, read N- to C-terminus: Fatty acyl-CoA reductase wat (517 aa).

Helical transmembrane passes span 378-398 and 492-512; these read ILCFLYHTLPALVMDAIMVII and VLHYTTLAVFYALAAWALYAL.

This sequence belongs to the fatty acyl-CoA reductase family.

Its subcellular location is the apical cell membrane. The enzyme catalyses a long-chain fatty acyl-CoA + 2 NADPH + 2 H(+) = a long-chain primary fatty alcohol + 2 NADP(+) + CoA. Its function is as follows. Catalyzes the reduction of saturated fatty acyl-CoA to fatty alcohols. The preferred substrates are C24:0 and C26:0. Necessary for the final stages of tracheal maturation, to facilitate the transition from water-filled to gas-filled tubes. May help to maintain the integrity of the outer hydrophobic envelope of the trachea. The protein is Fatty acyl-CoA reductase wat of Drosophila melanogaster (Fruit fly).